The primary structure comprises 500 residues: NAD(P)H-quinone oxidoreductase chain 4, chloroplastic (500 aa).

A run of 14 helical transmembrane segments spans residues 4–24, 37–57, 87–107, 113–130, 134–154, 167–187, 211–231, 242–262, 272–292, 313–333, 334–354, 386–406, 417–437, and 462–482; these read FPWL…IFFL, ISIC…HFQL, VGSI…AWPV, LFYF…GLFS, LLLF…LLSM, FILY…GMGL, ILLY…IPLH, HYST…YGLI, AHYL…IYAA, MGFI…GAIL, QILS…TASD, LALP…GLIT, LITF…LSML, and LFIL…PDLV.

This sequence belongs to the complex I subunit 4 family.

The protein resides in the plastid. Its subcellular location is the chloroplast thylakoid membrane. It carries out the reaction a plastoquinone + NADH + (n+1) H(+)(in) = a plastoquinol + NAD(+) + n H(+)(out). The enzyme catalyses a plastoquinone + NADPH + (n+1) H(+)(in) = a plastoquinol + NADP(+) + n H(+)(out). This chain is NAD(P)H-quinone oxidoreductase chain 4, chloroplastic, found in Agrostis stolonifera (Creeping bentgrass).